Consider the following 308-residue polypeptide: Elongation factor Ts (308 aa).

Positions 80–83 are involved in Mg(2+) ion dislocation from EF-Tu; the sequence is TDFV.

Belongs to the EF-Ts family.

It localises to the cytoplasm. Functionally, associates with the EF-Tu.GDP complex and induces the exchange of GDP to GTP. It remains bound to the aminoacyl-tRNA.EF-Tu.GTP complex up to the GTP hydrolysis stage on the ribosome. The polypeptide is Elongation factor Ts (Rhizobium rhizogenes (strain K84 / ATCC BAA-868) (Agrobacterium radiobacter)).